The following is a 424-amino-acid chain: Tyrosine--tRNA ligase (424 aa).

Residue Y37 participates in L-tyrosine binding. Positions 42-51 match the 'HIGH' region motif; sequence PTADSLHLGH. The L-tyrosine site is built by Y175 and Q179. Positions 235-239 match the 'KMSKS' region motif; it reads KFGKT. Residue K238 coordinates ATP. The S4 RNA-binding domain maps to 357-414; that stretch reads ADLQQALVNAELVPSRGQARTMIGSNAVTINGEKQSNAEYNFSDADRLFGRYTLLRRG.

It belongs to the class-I aminoacyl-tRNA synthetase family. TyrS type 1 subfamily. As to quaternary structure, homodimer.

It is found in the cytoplasm. It carries out the reaction tRNA(Tyr) + L-tyrosine + ATP = L-tyrosyl-tRNA(Tyr) + AMP + diphosphate + H(+). Functionally, catalyzes the attachment of tyrosine to tRNA(Tyr) in a two-step reaction: tyrosine is first activated by ATP to form Tyr-AMP and then transferred to the acceptor end of tRNA(Tyr). The chain is Tyrosine--tRNA ligase from Serratia proteamaculans (strain 568).